Here is a 119-residue protein sequence, read N- to C-terminus: Large ribosomal subunit protein bL20 (119 aa).

It belongs to the bacterial ribosomal protein bL20 family.

In terms of biological role, binds directly to 23S ribosomal RNA and is necessary for the in vitro assembly process of the 50S ribosomal subunit. It is not involved in the protein synthesizing functions of that subunit. This Bacillus velezensis (strain DSM 23117 / BGSC 10A6 / LMG 26770 / FZB42) (Bacillus amyloliquefaciens subsp. plantarum) protein is Large ribosomal subunit protein bL20.